Here is a 178-residue protein sequence, read N- to C-terminus: Interleukin-10 (178 aa).

The first 18 residues, 1–18 (MHSSALLCCLVLLTGVRA), serve as a signal peptide directing secretion. 2 cysteine pairs are disulfide-bonded: C30–C126 and C80–C132. A glycan (N-linked (GlcNAc...) asparagine) is linked at N134.

Belongs to the IL-10 family. As to quaternary structure, homodimer. Interacts with IL10RA and IL10RB.

It localises to the secreted. Functionally, major immune regulatory cytokine that acts on many cells of the immune system where it has profound anti-inflammatory functions, limiting excessive tissue disruption caused by inflammation. Mechanistically, IL10 binds to its heterotetrameric receptor comprising IL10RA and IL10RB leading to JAK1 and STAT2-mediated phosphorylation of STAT3. In turn, STAT3 translocates to the nucleus where it drives expression of anti-inflammatory mediators. Targets antigen-presenting cells (APCs) such as macrophages and monocytes and inhibits their release of pro-inflammatory cytokines including granulocyte-macrophage colony-stimulating factor /GM-CSF, granulocyte colony-stimulating factor/G-CSF, IL-1 alpha, IL-1 beta, IL-6, IL-8 and TNF-alpha. Also interferes with antigen presentation by reducing the expression of MHC-class II and co-stimulatory molecules, thereby inhibiting their ability to induce T cell activation. In addition, controls the inflammatory response of macrophages by reprogramming essential metabolic pathways including mTOR signaling. The chain is Interleukin-10 (IL10) from Cercocebus atys (Sooty mangabey).